A 248-amino-acid chain; its full sequence is Small ribosomal subunit protein eS6 (248 aa).

Positions Val-215–Lys-248 are disordered. The span at Ala-223–Lys-248 shows a compositional bias: basic and acidic residues. Ser-233, Ser-235, Ser-239, Ser-242, Ser-244, and Ser-245 each carry phosphoserine.

It belongs to the eukaryotic ribosomal protein eS6 family. As to quaternary structure, component of the small ribosomal subunit. Part of the small subunit (SSU) processome, composed of more than 70 proteins and the RNA chaperone small nucleolar RNA (snoRNA) U3. In terms of processing, ribosomal protein S6 is the major substrate of protein kinases in eukaryote ribosomes. The phosphorylation is stimulated by growth factors, tumor promoting agents, and mitogens. It is dephosphorylated at growth arrest.

The protein localises to the cytoplasm. It localises to the nucleus. Its subcellular location is the nucleolus. Component of the 40S small ribosomal subunit. Plays an important role in controlling cell growth and proliferation through the selective translation of particular classes of mRNA. Part of the small subunit (SSU) processome, first precursor of the small eukaryotic ribosomal subunit. During the assembly of the SSU processome in the nucleolus, many ribosome biogenesis factors, an RNA chaperone and ribosomal proteins associate with the nascent pre-rRNA and work in concert to generate RNA folding, modifications, rearrangements and cleavage as well as targeted degradation of pre-ribosomal RNA by the RNA exosome. This is Small ribosomal subunit protein eS6 (RpS6) from Drosophila melanogaster (Fruit fly).